Consider the following 271-residue polypeptide: Short-chain type dehydrogenase/reductase (271 aa).

Residue 25-49 coordinates NAD(+); sequence IVTGASRGIGREIALNMAEKGAKVV. Ser-166 contributes to the substrate binding site. Residue Tyr-179 is the Proton acceptor of the active site.

The protein belongs to the short-chain dehydrogenases/reductases (SDR) family.

This chain is Short-chain type dehydrogenase/reductase, found in Picea abies (Norway spruce).